The chain runs to 247 residues: ATP synthase subunit a, chloroplastic (247 aa).

5 helical membrane passes run 38–58, 95–115, 134–154, 199–219, and 220–240; these read QVLI…ILVV, VPFI…GALL, INTT…AGIS, LVVV…VMFL, and GLFT…AYIG.

It belongs to the ATPase A chain family. F-type ATPases have 2 components, CF(1) - the catalytic core - and CF(0) - the membrane proton channel. CF(1) has five subunits: alpha(3), beta(3), gamma(1), delta(1), epsilon(1). CF(0) has four main subunits: a, b, b' and c.

The protein localises to the plastid. It localises to the chloroplast thylakoid membrane. Key component of the proton channel; it plays a direct role in the translocation of protons across the membrane. The sequence is that of ATP synthase subunit a, chloroplastic from Lotus japonicus (Lotus corniculatus var. japonicus).